A 275-amino-acid polypeptide reads, in one-letter code: MAAELEYESVLCVKPDVSVYRIPPRASNRGYRASDWKLDQPDWTGRLRITSKGKIAYIKLEDKVSGELFAQAPVEQYPGIAVETVTDSSRYFVIRIQDGTGRSAFIGIGFTDRGDAFDFNVSLQDHFKWVKQETEISKESQEMDNRPKLDLGFKEGQTIKLSIGNITAKKGGASKPRASGTGGLSLLPPPPGGKVTIPPPSSSVAISNHVTPPPIPKSNHGGNDSDILLDLDSPAPVSTSAPAPVSTSNDLWGDFSTASSSVPNQAPQPSNWVQF.

The interval 168–275 (AKKGGASKPR…APQPSNWVQF (108 aa)) is disordered. Positions 187 to 201 (LPPPPGGKVTIPPPS) are enriched in pro residues. Phosphothreonine is present on Thr211. A compositionally biased stretch (low complexity) spans 233 to 248 (SPAPVSTSAPAPVSTS). 2 short sequence motifs (WXXF motif) span residues 252–255 (WGDF) and 272–275 (WVQF). Residues 256 to 275 (STASSSVPNQAPQPSNWVQF) are compositionally biased toward polar residues.

Belongs to the NECAP family. In terms of assembly, interacts with AP1G1 and AP2A1 components of the adapter protein complexes AP-1 and AP-2. Interacts with the GAE domain proteins GGA1, GGA2 and GGA3. As to expression, expressed primarily in brain (at protein level).

The protein localises to the cytoplasmic vesicle. It localises to the clathrin-coated vesicle membrane. Its subcellular location is the cell membrane. Its function is as follows. Involved in endocytosis. The chain is Adaptin ear-binding coat-associated protein 1 (Necap1) from Mus musculus (Mouse).